Reading from the N-terminus, the 1009-residue chain is Glutamate receptor ionotropic, delta-2 (1009 aa).

A signal peptide spans 1–23 (MKVFPAVLFLITFWSLEWEPVLP). Topologically, residues 24–566 (DSIIHIGAIF…DMFACLAPFD (543 aa)) are extracellular. N-linked (GlcNAc...) asparagine glycosylation is found at Asn-293, Asn-306, Asn-390, and Asn-426. Glu-531, Val-534, and Asp-535 together coordinate Ca(2+). The chain crosses the membrane as a helical span at residues 567–587 (LSLWACIAGTVLLVGTLVYLL). Over 588-635 (NWLNPPRLPMGSVSSTTLYNSMWFVYGSFVQQGGEVPYTTLATRMMMG) the chain is Cytoplasmic. A helical membrane pass occupies residues 636 to 656 (VWWLFALIVISSYTANLAAFL). Over 657–830 (TISRIENSIQ…KSGSALDIHS (174 aa)) the chain is Extracellular. N-linked (GlcNAc...) asparagine glycosylation occurs at Asn-713. Residues Asp-753, Asp-755, and Ser-757 each coordinate Ca(2+). Residues 831-851 (FAGVFFVLAAGVVLSCLIATV) traverse the membrane as a helical segment. Topologically, residues 852–1009 (ETWWTRRKGS…GNDPDRGTSI (158 aa)) are cytoplasmic. Positions 989–1009 (YQPTPAPNFSYGNDPDRGTSI) are disordered.

This sequence belongs to the glutamate-gated ion channel (TC 1.A.10.1) family. GRID2 subfamily. As to quaternary structure, tetramer; dimer of dimers. As to expression, expressed in cerebellar Purkinje cells, in crest cells in the medial octavolateral nucleus and in type I neurons of the optic tectum.

The protein localises to the postsynaptic cell membrane. It catalyses the reaction Ca(2+)(in) = Ca(2+)(out). The enzyme catalyses Na(+)(in) = Na(+)(out). In terms of biological role, member of the ionotropic glutamate receptor family, which plays a crucial role in synaptic organization and signal transduction in the central nervous system. Although it shares structural features with ionotropic glutamate receptors, does not bind glutamate as a primary ligand. Promotes synaptogenesis and mediates the D-Serine-dependent long term depression signals and AMPA receptor endocytosis of cerebellar parallel fiber-Purkinje cell (PF-PC) synapses through the NRX1B-CBLN1-GRID2 triad complex. In the presence of neurexins and cerebellins, forms cation-selective channels that are proposed to be gated by glycine and D-serine. However, recent research disputes this ligand-gated cation channel activity. Cation-selective ion channel activity can be triggered by GRM1 in Purkinje cells. This chain is Glutamate receptor ionotropic, delta-2, found in Danio rerio (Zebrafish).